Here is a 391-residue protein sequence, read N- to C-terminus: Heme A synthase (391 aa).

Transmembrane regions (helical) follow at residues 37 to 57 (IRLW…VGGL), 121 to 141 (RQLG…FLAA), 152 to 172 (LLAL…MVAS), 186 to 206 (LATH…QALL), 229 to 249 (TTVL…VAGI), 298 to 318 (FLHR…WIFG), 332 to 352 (LLAM…LSAA), and 354 to 374 (WQVA…ILHA). Histidine 300 serves as a coordination point for heme. Histidine 360 contacts heme.

The protein belongs to the COX15/CtaA family. Type 2 subfamily. Interacts with CtaB. It depends on heme b as a cofactor.

The protein localises to the cell membrane. It catalyses the reaction Fe(II)-heme o + 2 A + H2O = Fe(II)-heme a + 2 AH2. It participates in porphyrin-containing compound metabolism; heme A biosynthesis; heme A from heme O: step 1/1. Functionally, catalyzes the conversion of heme O to heme A by two successive hydroxylations of the methyl group at C8. The first hydroxylation forms heme I, the second hydroxylation results in an unstable dihydroxymethyl group, which spontaneously dehydrates, resulting in the formyl group of heme A. This chain is Heme A synthase, found in Cereibacter sphaeroides (strain ATCC 17029 / ATH 2.4.9) (Rhodobacter sphaeroides).